We begin with the raw amino-acid sequence, 309 residues long: MRPKISIIGAGFVGSTAAHWIASKELGDVVLVDIIEGVPQGKGLDLLQAGPIEGFDVKITGTNDYSATAGSDIIVVTSGAPRKPGMSREDLIRVNADITRDCISKAAPLSPNAIIIMVNNPLDTMTYLAKQVSGFPKNRVVGQAGVLDTARYRTFIAMEAGVSVEDIQAMLMGGHGDEMVPLPRFTTISGIPVTEFISKERLDAIVDRTRKGGGEIVNLLKTGSAYYAPSAATVQMVEAILRDKKRVLPCSCYLEGEYGLNDIYFGVPCVLGAGGVERVLELPLNDEEMALVKKSAEAVSSSIAALKAM.

Residues glycine 9–glycine 14 and aspartate 33 each bind NAD(+). Substrate-binding residues include arginine 82 and arginine 88. NAD(+) contacts are provided by residues asparagine 95 and valine 118–asparagine 120. Substrate-binding residues include asparagine 120 and arginine 151. Residue histidine 175 is the Proton acceptor of the active site.

This sequence belongs to the LDH/MDH superfamily. MDH type 3 family.

The catalysed reaction is (S)-malate + NAD(+) = oxaloacetate + NADH + H(+). Functionally, catalyzes the reversible oxidation of malate to oxaloacetate. In Roseiflexus sp. (strain RS-1), this protein is Malate dehydrogenase.